Consider the following 573-residue polypeptide: Plasmepsin X (573 aa).

A signal peptide spans 1-26 (MKRISPLNTLFYLSLFFSYTFKGLKC). The propeptide occupies 27–221 (TRIYKIGTKA…SSIEKNFIAL (195 aa)). Disulfide bonds link cysteine 39–cysteine 51 and cysteine 42–cysteine 48. A disordered region spans residues 167–211 (KGNKNFTNNENNSDNENNSDNENNSDNENNLDNENNLDNENNSDN). Residues 183-203 (NNSDNENNSDNENNLDNENNL) show a composition bias toward acidic residues. The 320-residue stretch at 248–567 (FVGELLVGTP…ESRPSMVGVA (320 aa)) folds into the Peptidase A1 domain. The active site involves aspartate 266. The cysteines at positions 279 and 284 are disulfide-linked. A glycan (N-linked (GlcNAc...) asparagine) is linked at asparagine 334. Cysteine 447 and cysteine 448 form a disulfide bridge. Residue aspartate 457 is part of the active site. Cysteine 482 and cysteine 521 are disulfide-bonded.

The protein belongs to the peptidase A1 family. In terms of processing, autocleaved into a p16 prodomain form and two mature forms p44 and p51.

The protein localises to the cytoplasmic vesicle. Its subcellular location is the secretory vesicle. With respect to regulation, inhibited by aminohydantoin compounds such as CWHM-117. Functionally, during the asexual blood stage, processes key proteins essential for merozoite egress and invasion of host erythrocytes. Cleaves and activates proteases SUB1 and SUB2. May process members of the EBL and Rh protein families. Also cleaves apical membrane protein AMA1. During the mosquito vector stage and probably in ookinetes, cleaves CelTOS. The protein is Plasmepsin X of Plasmodium falciparum (isolate NF54).